A 367-amino-acid chain; its full sequence is Chorismate synthase (367 aa).

Arg48 contacts NADP(+). FMN contacts are provided by residues 125 to 127, Gly290, 305 to 309, and Arg333; these read RAS and KPTSS.

Belongs to the chorismate synthase family. Homotetramer. Requires FMNH2 as cofactor.

The catalysed reaction is 5-O-(1-carboxyvinyl)-3-phosphoshikimate = chorismate + phosphate. It functions in the pathway metabolic intermediate biosynthesis; chorismate biosynthesis; chorismate from D-erythrose 4-phosphate and phosphoenolpyruvate: step 7/7. Catalyzes the anti-1,4-elimination of the C-3 phosphate and the C-6 proR hydrogen from 5-enolpyruvylshikimate-3-phosphate (EPSP) to yield chorismate, which is the branch point compound that serves as the starting substrate for the three terminal pathways of aromatic amino acid biosynthesis. This reaction introduces a second double bond into the aromatic ring system. The polypeptide is Chorismate synthase (Protochlamydia amoebophila (strain UWE25)).